The chain runs to 146 residues: Hemoglobin subunit beta (146 aa).

Residues 2 to 146 (QWTAEEKQLI…VAHALARKYH (145 aa)) form the Globin domain. The heme b site is built by H63 and H92.

It belongs to the globin family. Heterotetramer of two alpha chains and two beta chains. Red blood cells.

Involved in oxygen transport from the lung to the various peripheral tissues. This Rhea americana (Greater rhea) protein is Hemoglobin subunit beta (HBB).